A 134-amino-acid chain; its full sequence is MKAFSPVRSVRKNSLSDHSLGISRSKTPVDDPMSLLYNMNDCYSKLKELVPSIPQNKKVSKMEILQHVIDYILDLQIALDSHPTIVSLHHQRPGQSQASRTPLTTLNTDISILSLQASEFPSELMSSDSKALCG.

Residues Ser14 and Ser25 each carry the phosphoserine modification. In terms of domain architecture, bHLH spans 23–75; the sequence is SRSKTPVDDPMSLLYNMNDCYSKLKELVPSIPQNKKVSKMEILQHVIDYILDL. The short motif at 106 to 115 is the Nuclear export signal element; it reads LNTDISILSL.

As to quaternary structure, interacts with GATA4 and NKX2-5. Interacts with NR0B2. Interacts with CLOCK and BMAL1. Interacts with IFI204. Interacts with NEDD9/HEF1. Interacts with ASB4; this interaction promotes ID2 proteasomal degradation. Ubiquitinated in a ASB4-depedent manner, leading to proteasomal degradation. In terms of processing, phosphorylated in vitro by CDK1, PKA and PKC.

It localises to the cytoplasm. The protein resides in the nucleus. Transcriptional regulator (lacking a basic DNA binding domain) which negatively regulates the basic helix-loop-helix (bHLH) transcription factors by forming heterodimers and inhibiting their DNA binding and transcriptional activity. Implicated in regulating a variety of cellular processes, including cellular growth, senescence, differentiation, apoptosis, angiogenesis, and neoplastic transformation. Inhibits skeletal muscle and cardiac myocyte differentiation. Regulates the circadian clock by repressing the transcriptional activator activity of the CLOCK-BMAL1 heterodimer. Restricts the CLOCK and BMAL1 localization to the cytoplasm. Plays a role in both the input and output pathways of the circadian clock: in the input component, is involved in modulating the magnitude of photic entrainment and in the output component, contributes to the regulation of a variety of liver clock-controlled genes involved in lipid metabolism. The polypeptide is DNA-binding protein inhibitor ID-2 (ID2) (Sus scrofa (Pig)).